We begin with the raw amino-acid sequence, 282 residues long: 4-hydroxy-3-methylbut-2-enyl diphosphate reductase (282 aa).

Cys12 is a binding site for [4Fe-4S] cluster. Residues His40 and His72 each contribute to the (2E)-4-hydroxy-3-methylbut-2-enyl diphosphate site. Dimethylallyl diphosphate is bound by residues His40 and His72. His40 and His72 together coordinate isopentenyl diphosphate. Residue Cys94 participates in [4Fe-4S] cluster binding. A (2E)-4-hydroxy-3-methylbut-2-enyl diphosphate-binding site is contributed by His122. His122 provides a ligand contact to dimethylallyl diphosphate. His122 lines the isopentenyl diphosphate pocket. Glu124 acts as the Proton donor in catalysis. Residue Thr160 participates in (2E)-4-hydroxy-3-methylbut-2-enyl diphosphate binding. Cys188 contacts [4Fe-4S] cluster. (2E)-4-hydroxy-3-methylbut-2-enyl diphosphate-binding residues include Ser216, Asn218, and Ser260. Residues Ser216, Asn218, and Ser260 each contribute to the dimethylallyl diphosphate site. Residues Ser216, Asn218, and Ser260 each contribute to the isopentenyl diphosphate site.

It belongs to the IspH family. It depends on [4Fe-4S] cluster as a cofactor.

The enzyme catalyses isopentenyl diphosphate + 2 oxidized [2Fe-2S]-[ferredoxin] + H2O = (2E)-4-hydroxy-3-methylbut-2-enyl diphosphate + 2 reduced [2Fe-2S]-[ferredoxin] + 2 H(+). It catalyses the reaction dimethylallyl diphosphate + 2 oxidized [2Fe-2S]-[ferredoxin] + H2O = (2E)-4-hydroxy-3-methylbut-2-enyl diphosphate + 2 reduced [2Fe-2S]-[ferredoxin] + 2 H(+). Its pathway is isoprenoid biosynthesis; dimethylallyl diphosphate biosynthesis; dimethylallyl diphosphate from (2E)-4-hydroxy-3-methylbutenyl diphosphate: step 1/1. It participates in isoprenoid biosynthesis; isopentenyl diphosphate biosynthesis via DXP pathway; isopentenyl diphosphate from 1-deoxy-D-xylulose 5-phosphate: step 6/6. Functionally, catalyzes the conversion of 1-hydroxy-2-methyl-2-(E)-butenyl 4-diphosphate (HMBPP) into a mixture of isopentenyl diphosphate (IPP) and dimethylallyl diphosphate (DMAPP). Acts in the terminal step of the DOXP/MEP pathway for isoprenoid precursor biosynthesis. The chain is 4-hydroxy-3-methylbut-2-enyl diphosphate reductase from Geotalea daltonii (strain DSM 22248 / JCM 15807 / FRC-32) (Geobacter daltonii).